The primary structure comprises 211 residues: Uridine kinase (211 aa).

12–19 contributes to the ATP binding site; sequence GGSGSGKT.

This sequence belongs to the uridine kinase family.

It is found in the cytoplasm. It carries out the reaction uridine + ATP = UMP + ADP + H(+). The enzyme catalyses cytidine + ATP = CMP + ADP + H(+). Its pathway is pyrimidine metabolism; CTP biosynthesis via salvage pathway; CTP from cytidine: step 1/3. The protein operates within pyrimidine metabolism; UMP biosynthesis via salvage pathway; UMP from uridine: step 1/1. This chain is Uridine kinase, found in Bacillus velezensis (strain DSM 23117 / BGSC 10A6 / LMG 26770 / FZB42) (Bacillus amyloliquefaciens subsp. plantarum).